The primary structure comprises 335 residues: Methylthioribose-1-phosphate isomerase (335 aa).

Substrate contacts are provided by residues 47-49 (RGA), Arg81, and Gln184. Asp225 acts as the Proton donor in catalysis. Position 235–236 (235–236 (NK)) interacts with substrate.

This sequence belongs to the eIF-2B alpha/beta/delta subunits family. MtnA subfamily.

The enzyme catalyses 5-(methylsulfanyl)-alpha-D-ribose 1-phosphate = 5-(methylsulfanyl)-D-ribulose 1-phosphate. The protein operates within amino-acid biosynthesis; L-methionine biosynthesis via salvage pathway; L-methionine from S-methyl-5-thio-alpha-D-ribose 1-phosphate: step 1/6. Its function is as follows. Catalyzes the interconversion of methylthioribose-1-phosphate (MTR-1-P) into methylthioribulose-1-phosphate (MTRu-1-P). The polypeptide is Methylthioribose-1-phosphate isomerase (Synechococcus sp. (strain CC9902)).